The sequence spans 184 residues: MYKMPFDRAGCLNNVGGFGSCGSNYNRINDAKLLKRELHFTETLLDTINRECASGFNNYGYGGGNCGFNDCGFGGCGPAPCGPGGFGGGFGGGFGGGFGGPFNGGAGVEVEGWGYGPQPFQGGFGGGYFDKDDDKKKKKKDDKKDDPCNPFCKPCYKPVCNNPKEKVCKCKECKRASRKIYEDY.

Residues Asp-130–Asn-149 are disordered.

It localises to the virion. This is an uncharacterized protein from Acanthamoeba polyphaga (Amoeba).